Here is a 339-residue protein sequence, read N- to C-terminus: Heat-inducible transcription repressor HrcA (339 aa).

It belongs to the HrcA family.

In terms of biological role, negative regulator of class I heat shock genes (grpE-dnaK-dnaJ and groELS operons). Prevents heat-shock induction of these operons. This is Heat-inducible transcription repressor HrcA from Acidothermus cellulolyticus (strain ATCC 43068 / DSM 8971 / 11B).